Here is a 289-residue protein sequence, read N- to C-terminus: Oxaloacetate decarboxylase 1 (289 aa).

Position 50 (Ser50) interacts with substrate. Asp88 serves as a coordination point for Mg(2+). Residues Arg159 and His235 each contribute to the substrate site.

This sequence belongs to the isocitrate lyase/PEP mutase superfamily. Oxaloacetate decarboxylase family. As to quaternary structure, homotetramer; dimer of dimers. Requires Mg(2+) as cofactor.

It carries out the reaction oxaloacetate + H(+) = pyruvate + CO2. Catalyzes the decarboxylation of oxaloacetate into pyruvate. Seems to play a role in maintaining cellular concentrations of bicarbonate and pyruvate. In Pseudomonas fluorescens (strain Pf0-1), this protein is Oxaloacetate decarboxylase 1.